The following is a 493-amino-acid chain: Glutamate--tRNA ligase (493 aa).

The short motif at 10 to 20 (PSPTGFVHIGS) is the 'HIGH' region element. 4 residues coordinate Zn(2+): Cys114, Cys116, Cys141, and Glu143. The 'KMSKS' region signature appears at 258-262 (KLSKR). Lys261 provides a ligand contact to ATP.

Belongs to the class-I aminoacyl-tRNA synthetase family. Glutamate--tRNA ligase type 1 subfamily. In terms of assembly, monomer. Zn(2+) is required as a cofactor.

It localises to the cytoplasm. It catalyses the reaction tRNA(Glu) + L-glutamate + ATP = L-glutamyl-tRNA(Glu) + AMP + diphosphate. In terms of biological role, catalyzes the attachment of glutamate to tRNA(Glu) in a two-step reaction: glutamate is first activated by ATP to form Glu-AMP and then transferred to the acceptor end of tRNA(Glu). The polypeptide is Glutamate--tRNA ligase (Alkaliphilus metalliredigens (strain QYMF)).